The primary structure comprises 294 residues: uncharacterized protein (294 aa).

An N-terminal signal peptide occupies residues 1-18; the sequence is MKKLLLIITVFFTCSAVA.

This is an uncharacterized protein from Rickettsia bellii (strain RML369-C).